The primary structure comprises 396 residues: Elongation factor Tu (396 aa).

In terms of domain architecture, tr-type G spans 10-206 (KPHVNVGTIG…ALDSYIPTPK (197 aa)). The G1 stretch occupies residues 19–26 (GHVDHGKT). Residue 19–26 (GHVDHGKT) participates in GTP binding. Residue T26 coordinates Mg(2+). Residues 60-64 (GITIS) form a G2 region. The segment at 81 to 84 (DCPG) is G3. GTP contacts are provided by residues 81 to 85 (DCPGH) and 136 to 139 (NKAD). The interval 136–139 (NKAD) is G4. A G5 region spans residues 174-176 (SAL).

Belongs to the TRAFAC class translation factor GTPase superfamily. Classic translation factor GTPase family. EF-Tu/EF-1A subfamily. As to quaternary structure, monomer.

Its subcellular location is the cytoplasm. It catalyses the reaction GTP + H2O = GDP + phosphate + H(+). In terms of biological role, GTP hydrolase that promotes the GTP-dependent binding of aminoacyl-tRNA to the A-site of ribosomes during protein biosynthesis. The protein is Elongation factor Tu of Vesicomyosocius okutanii subsp. Calyptogena okutanii (strain HA).